Reading from the N-terminus, the 258-residue chain is UPF0246 protein PM0066 (258 aa).

The protein belongs to the UPF0246 family.

This Pasteurella multocida (strain Pm70) protein is UPF0246 protein PM0066.